Here is a 639-residue protein sequence, read N- to C-terminus: Elongation factor 4 (639 aa).

The tr-type G domain maps to Thr-39 to Val-221. GTP is bound by residues Asp-51–Thr-56 and Asn-168–Asp-171.

Belongs to the TRAFAC class translation factor GTPase superfamily. Classic translation factor GTPase family. LepA subfamily.

Its subcellular location is the cell membrane. The catalysed reaction is GTP + H2O = GDP + phosphate + H(+). Required for accurate and efficient protein synthesis under certain stress conditions. May act as a fidelity factor of the translation reaction, by catalyzing a one-codon backward translocation of tRNAs on improperly translocated ribosomes. Back-translocation proceeds from a post-translocation (POST) complex to a pre-translocation (PRE) complex, thus giving elongation factor G a second chance to translocate the tRNAs correctly. Binds to ribosomes in a GTP-dependent manner. The sequence is that of Elongation factor 4 from Frankia casuarinae (strain DSM 45818 / CECT 9043 / HFP020203 / CcI3).